The following is a 146-amino-acid chain: Anti-sigma F factor (146 aa).

Belongs to the anti-sigma-factor family.

It catalyses the reaction L-seryl-[protein] + ATP = O-phospho-L-seryl-[protein] + ADP + H(+). The catalysed reaction is L-threonyl-[protein] + ATP = O-phospho-L-threonyl-[protein] + ADP + H(+). Functionally, binds to sigma F and blocks its ability to form an RNA polymerase holoenzyme (E-sigma F). Phosphorylates SpoIIAA on a serine residue. This phosphorylation may enable SpoIIAA to act as an anti-anti-sigma factor that counteracts SpoIIAB and thus releases sigma F from inhibition. In Bacillus velezensis (strain DSM 23117 / BGSC 10A6 / LMG 26770 / FZB42) (Bacillus amyloliquefaciens subsp. plantarum), this protein is Anti-sigma F factor.